A 364-amino-acid polypeptide reads, in one-letter code: Aminomethyltransferase (364 aa).

The protein belongs to the GcvT family. In terms of assembly, the glycine cleavage system is composed of four proteins: P, T, L and H.

It catalyses the reaction N(6)-[(R)-S(8)-aminomethyldihydrolipoyl]-L-lysyl-[protein] + (6S)-5,6,7,8-tetrahydrofolate = N(6)-[(R)-dihydrolipoyl]-L-lysyl-[protein] + (6R)-5,10-methylene-5,6,7,8-tetrahydrofolate + NH4(+). Its function is as follows. The glycine cleavage system catalyzes the degradation of glycine. This Shewanella putrefaciens (strain CN-32 / ATCC BAA-453) protein is Aminomethyltransferase.